The following is a 358-amino-acid chain: Alanine racemase (358 aa).

Lys35 serves as the catalytic Proton acceptor; specific for D-alanine. Lys35 carries the N6-(pyridoxal phosphate)lysine modification. Residue Arg130 coordinates substrate. Tyr255 acts as the Proton acceptor; specific for L-alanine in catalysis. Substrate is bound at residue Met303.

This sequence belongs to the alanine racemase family. Pyridoxal 5'-phosphate serves as cofactor.

The enzyme catalyses L-alanine = D-alanine. Its pathway is amino-acid biosynthesis; D-alanine biosynthesis; D-alanine from L-alanine: step 1/1. In terms of biological role, catalyzes the interconversion of L-alanine and D-alanine. May also act on other amino acids. The chain is Alanine racemase (alr) from Shewanella putrefaciens (strain CN-32 / ATCC BAA-453).